A 363-amino-acid chain; its full sequence is NAD(P)H-quinone oxidoreductase subunit 1, chloroplastic (363 aa).

The next 6 helical transmembrane spans lie at 27–47, 104–124, 127–147, 248–268, 300–320, and 343–363; these read VWLL…VLVI, IAVI…HLVL, LSIG…GLLM, YSGI…LVSS, VFGM…FLFI, and FLLP…LFSL.

The protein belongs to the complex I subunit 1 family. NDH is composed of at least 16 different subunits, 5 of which are encoded in the nucleus.

The protein resides in the plastid. The protein localises to the chloroplast thylakoid membrane. It carries out the reaction a plastoquinone + NADH + (n+1) H(+)(in) = a plastoquinol + NAD(+) + n H(+)(out). The enzyme catalyses a plastoquinone + NADPH + (n+1) H(+)(in) = a plastoquinol + NADP(+) + n H(+)(out). In terms of biological role, NDH shuttles electrons from NAD(P)H:plastoquinone, via FMN and iron-sulfur (Fe-S) centers, to quinones in the photosynthetic chain and possibly in a chloroplast respiratory chain. The immediate electron acceptor for the enzyme in this species is believed to be plastoquinone. Couples the redox reaction to proton translocation, and thus conserves the redox energy in a proton gradient. This is NAD(P)H-quinone oxidoreductase subunit 1, chloroplastic from Ranunculus macranthus (Large buttercup).